A 307-amino-acid chain; its full sequence is Transcription initiation factor IIB 5 (307 aa).

The segment at 19 to 47 adopts a TFIIB-type zinc-finger fold; it reads TTEPCPECGGPVRTNSAETVCADCGLIID. Zn(2+)-binding residues include C23, C26, C39, and C42. 2 stretches are compositionally biased toward basic and acidic residues: residues 54–66 and 107–121; these read GPEW…DTAK and MRRE…STKE. Residues 54 to 121 form a disordered region; sequence GPEWHRDDAD…SRGRWRSTKE (68 aa). 2 tandem repeats follow at residues 129–212 and 223–304.

Belongs to the TFIIB family.

Its function is as follows. Stabilizes TBP binding to an archaeal box-A promoter. Also responsible for recruiting RNA polymerase II to the pre-initiation complex (DNA-TBP-TFIIB). This Halobacterium salinarum (strain ATCC 700922 / JCM 11081 / NRC-1) (Halobacterium halobium) protein is Transcription initiation factor IIB 5.